We begin with the raw amino-acid sequence, 419 residues long: Innexin inx5 (419 aa).

Residues 1–21 are Cytoplasmic-facing; sequence MFSAVKPLSKYLQFKSIRIYD. The chain crosses the membrane as a helical span at residues 22–42; sequence SVFTIHSRCTVVILLTCSLLL. Residues 43–162 are Extracellular-facing; that stretch reads SARQYFGDPI…QTERQYLRYY (120 aa). Residues 163-183 form a helical membrane-spanning segment; that stretch reads QWVIILLLFQSFVFYFPSCLW. Over 184–238 the chain is Cytoplasmic; it reads KVWEGRRLKQLCSEVGDALLSEETYNTRLRMLVKYFTTDYEDMHFCYMAKYVFCE. Residues 239 to 259 form a helical membrane-spanning segment; the sequence is VLNFLISVVNIIVLEVFLNGF. The Extracellular segment spans residues 260 to 320; that stretch reads WSKYLRALAT…ILPLNILNEK (61 aa). A helical transmembrane segment spans residues 321 to 341; the sequence is IFVFLWAWFLLMALMSGLNLL. Topologically, residues 342-419 are cytoplasmic; it reads CRLAMICSRY…ASGSTLESPV (78 aa).

The protein belongs to the pannexin family. Expressed in the cortex of the pupal CNS and at low levels in the wing imaginal disk.

The protein resides in the cell membrane. It is found in the cell junction. Its subcellular location is the gap junction. Structural component of the gap junctions. The sequence is that of Innexin inx5 (Inx5) from Drosophila melanogaster (Fruit fly).